The primary structure comprises 130 residues: Spore coat protein M (130 aa).

Involved in spore outer coat assembly. May be part of a cross-linked insoluble skeleton that surrounds the spore, serves as a matrix for the assembly of additional outer coat material, and confers structural stability to the final structure. The protein is Spore coat protein M (cotM) of Bacillus subtilis (strain 168).